We begin with the raw amino-acid sequence, 128 residues long: Histone H2A (128 aa).

Belongs to the histone H2A family. As to quaternary structure, the nucleosome is a histone octamer containing two molecules each of H2A, H2B, H3 and H4 assembled in one H3-H4 heterotetramer and two H2A-H2B heterodimers. The octamer wraps approximately 147 bp of DNA.

Its subcellular location is the nucleus. It is found in the chromosome. In terms of biological role, core component of nucleosome. Nucleosomes wrap and compact DNA into chromatin, limiting DNA accessibility to the cellular machineries which require DNA as a template. Histones thereby play a central role in transcription regulation, DNA repair, DNA replication and chromosomal stability. DNA accessibility is regulated via a complex set of post-translational modifications of histones, also called histone code, and nucleosome remodeling. This chain is Histone H2A (HTA1), found in Encephalitozoon cuniculi (strain GB-M1) (Microsporidian parasite).